Here is a 1018-residue protein sequence, read N- to C-terminus: Transmembrane protein 132A (1018 aa).

An N-terminal signal peptide occupies residues 1 to 32; it reads MTERKAAAPRGPYGAWFCLLVALALEVVRVSS. At 33–846 the chain is on the extracellular side; sequence NHDTLDPIYL…VTDLELGMYA (814 aa). Asn276 carries an N-linked (GlcNAc...) asparagine glycan. Residues 606-911 are binds to HSPA5/GRP78; sequence IEVRSPLSDA…QLDRCSSSGP (306 aa). The tract at residues 666-1018 is confers cellular localization similar to full-length form; it reads LPAPKQEVAL…NYMERIRGSS (353 aa). Residues 807–818 are compositionally biased toward basic and acidic residues; the sequence is ERAEEEAGKEEN. A disordered region spans residues 807–833; sequence ERAEEEAGKEENEAKEEEEDEEEMVPA. Residues 819-830 are compositionally biased toward acidic residues; it reads EAKEEEEDEEEM. A helical membrane pass occupies residues 847-867; it reads LLGIFCLAILIFLVNGVVFVL. The Cytoplasmic segment spans residues 868–1018; sequence RYQRKEPPDS…NYMERIRGSS (151 aa). Residues 900 to 956 form a disordered region; it reads SRQLDRCSSSGPPKGEGGCPCESGAGGDASTVAPSASESPAGSSSTLARKEAGGRRK. Low complexity-rich tracts occupy residues 906-922 and 932-944; these read CSSS…PCES and APSA…GSSS.

The protein belongs to the TMEM132 family. Interacts with HSPA5/GRP78.

Its subcellular location is the golgi apparatus membrane. It is found in the endoplasmic reticulum membrane. In terms of biological role, may play a role in embryonic and postnatal development of the brain. Increased resistance to cell death induced by serum starvation in cultured cells. Regulates cAMP-induced GFAP gene expression via STAT3 phosphorylation. This chain is Transmembrane protein 132A (Tmem132a), found in Mus musculus (Mouse).